Here is a 693-residue protein sequence, read N- to C-terminus: tRNA (guanine(37)-N(1))-methyltransferase (693 aa).

S-adenosyl-L-methionine-binding positions include R327, 365–366 (DI), and 392–393 (DA). Residues 497 to 572 (AGDSHQSNSH…QKAEDAPTNE (76 aa)) are disordered. The segment covering 500 to 512 (SHQSNSHQSNPHE) has biased composition (low complexity). N591 is an S-adenosyl-L-methionine binding site.

This sequence belongs to the class I-like SAM-binding methyltransferase superfamily. TRM5/TYW2 family. As to quaternary structure, monomer.

Its subcellular location is the mitochondrion matrix. It localises to the nucleus. It is found in the cytoplasm. The enzyme catalyses guanosine(37) in tRNA + S-adenosyl-L-methionine = N(1)-methylguanosine(37) in tRNA + S-adenosyl-L-homocysteine + H(+). In terms of biological role, specifically methylates the N1 position of guanosine-37 in various cytoplasmic and mitochondrial tRNAs. Methylation is not dependent on the nature of the nucleoside 5' of the target nucleoside. This is the first step in the biosynthesis of wybutosine (yW), a modified base adjacent to the anticodon of tRNAs and required for accurate decoding. This is tRNA (guanine(37)-N(1))-methyltransferase from Plasmodium vivax (strain Salvador I).